We begin with the raw amino-acid sequence, 207 residues long: Guanylate kinase (207 aa).

Residues Gly5 to Arg184 form the Guanylate kinase-like domain. Residue Ala12–Ser19 participates in ATP binding.

It belongs to the guanylate kinase family.

It is found in the cytoplasm. It carries out the reaction GMP + ATP = GDP + ADP. Its function is as follows. Essential for recycling GMP and indirectly, cGMP. In Shewanella sp. (strain MR-7), this protein is Guanylate kinase.